Here is a 375-residue protein sequence, read N- to C-terminus: AT-rich binding protein (375 aa).

A C2H2-type 1 zinc finger spans residues 29-52 (IVCHTCQEELQTQDQFWKHIQDEH). Over residues 110-119 (DDQREMDIHE) the composition is skewed to basic and acidic residues. Residues 110-142 (DDQREMDIHEAQQQQHQQQQQHQQQQQLQQQQQ) are disordered. Residues 121–142 (QQQQHQQQQQHQQQQQLQQQQQ) are compositionally biased toward low complexity. 2 C2H2-type zinc fingers span residues 308–332 (YICD…RVVH) and 338–361 (FNCE…KKKH).

The protein resides in the nucleus. Its function is as follows. May be a transcription factor for genes having (A+T) stretches in their promoter and/or enhancer regions. Binds to AT rich DNA. The protein is AT-rich binding protein of Drosophila pseudoobscura pseudoobscura (Fruit fly).